A 96-amino-acid chain; its full sequence is (4S)-4-hydroxy-5-phosphonooxypentane-2,3-dione isomerase (96 aa).

One can recognise an ABM domain in the interval 2–91 (HVTLVEINVH…MTGPRKKRLF (90 aa)).

This sequence belongs to the LsrG family. In terms of assembly, homodimer.

The protein resides in the cytoplasm. The catalysed reaction is (2S)-2-hydroxy-3,4-dioxopentyl phosphate = 3-hydroxy-2,4-dioxopentyl phosphate. In terms of biological role, involved in the degradation of phospho-AI-2, thereby terminating induction of the lsr operon and closing the AI-2 signaling cycle. Catalyzes the conversion of (4S)-4-hydroxy-5-phosphonooxypentane-2,3-dione (P-DPD) to 3-hydroxy-5-phosphonooxypentane-2,4-dione (P-HPD). The polypeptide is (4S)-4-hydroxy-5-phosphonooxypentane-2,3-dione isomerase (Escherichia coli O9:H4 (strain HS)).